A 191-amino-acid chain; its full sequence is ATP-dependent Clp protease proteolytic subunit 1 (191 aa).

Residue Ser-91 is the Nucleophile of the active site. His-116 is a catalytic residue.

It belongs to the peptidase S14 family. Fourteen ClpP subunits assemble into 2 heptameric rings which stack back to back to give a disk-like structure with a central cavity, resembling the structure of eukaryotic proteasomes.

It is found in the cytoplasm. The enzyme catalyses Hydrolysis of proteins to small peptides in the presence of ATP and magnesium. alpha-casein is the usual test substrate. In the absence of ATP, only oligopeptides shorter than five residues are hydrolyzed (such as succinyl-Leu-Tyr-|-NHMec, and Leu-Tyr-Leu-|-Tyr-Trp, in which cleavage of the -Tyr-|-Leu- and -Tyr-|-Trp bonds also occurs).. In terms of biological role, cleaves peptides in various proteins in a process that requires ATP hydrolysis. Has a chymotrypsin-like activity. Plays a major role in the degradation of misfolded proteins. This chain is ATP-dependent Clp protease proteolytic subunit 1, found in Chlamydia caviae (strain ATCC VR-813 / DSM 19441 / 03DC25 / GPIC) (Chlamydophila caviae).